The following is a 734-amino-acid chain: Putative protocadherin beta-18 (734 aa).

Cadherin domains are found at residues 1–79 (MWKT…TPTF), 80–188 (LNNH…APEF), 189–293 (EKPV…PPEI), 294–398 (AMTS…APIF), and 399–508 (TQTS…SPFV). N-linked (GlcNAc...) asparagine glycosylation is present at asparagine 115. 2 N-linked (GlcNAc...) asparagine glycosylation sites follow: asparagine 365 and asparagine 383. A glycan (N-linked (GlcNAc...) asparagine) is linked at asparagine 514. Residues 515–621 (GSAPCTELVP…GFSQPYLPLT (107 aa)) form the Cadherin 6 domain. The chain crosses the membrane as a helical span at residues 638 to 658 (VVALASVSSLFLFSVFLFVAV).

It localises to the cell membrane. In terms of biological role, potential calcium-dependent cell-adhesion protein. This chain is Putative protocadherin beta-18 (PCDHB18P), found in Homo sapiens (Human).